The following is a 340-amino-acid chain: Histidinol-phosphate aminotransferase (340 aa).

The residue at position 204 (K204) is an N6-(pyridoxal phosphate)lysine.

The protein belongs to the class-II pyridoxal-phosphate-dependent aminotransferase family. Histidinol-phosphate aminotransferase subfamily. It depends on pyridoxal 5'-phosphate as a cofactor.

It carries out the reaction L-histidinol phosphate + 2-oxoglutarate = 3-(imidazol-4-yl)-2-oxopropyl phosphate + L-glutamate. It participates in amino-acid biosynthesis; L-histidine biosynthesis; L-histidine from 5-phospho-alpha-D-ribose 1-diphosphate: step 7/9. The polypeptide is Histidinol-phosphate aminotransferase (Thermococcus gammatolerans (strain DSM 15229 / JCM 11827 / EJ3)).